We begin with the raw amino-acid sequence, 470 residues long: Neuraminidase (470 aa).

The Intravirion portion of the chain corresponds to 1–6 (MNPNQK). Residues 7 to 27 (IICISATGMTLSVVSLLIGIA) traverse the membrane as a helical segment. Residues 11–33 (SATGMTLSVVSLLIGIANLGLNI) are involved in apical transport and lipid raft association. Residues 28-470 (NLGLNIGLHY…HDGAEIIYFK (443 aa)) lie on the Virion surface side of the membrane. The hypervariable stalk region stretch occupies residues 36–88 (HYKVGDTPDANTPNVNETNSTTTIINNNTQNNFTNITNIIVSKNEERTFLNLT). N-linked (GlcNAc...) asparagine; by host glycans are attached at residues Asn51, Asn54, Asn62, Asn67, Asn70, and Asn86. The segment at 91–470 (LCEVNSWHIL…HDGAEIIYFK (380 aa)) is head of neuraminidase. 8 disulfide bridges follow: Cys92–Cys419, Cys124–Cys129, Cys184–Cys231, Cys233–Cys238, Cys279–Cys292, Cys281–Cys290, Cys319–Cys337, and Cys423–Cys449. Arg118 provides a ligand contact to substrate. N-linked (GlcNAc...) asparagine; by host glycosylation is present at Asn146. The active-site Proton donor/acceptor is the Asp151. A substrate-binding site is contributed by Arg152. Residue Asn201 is glycosylated (N-linked (GlcNAc...) asparagine; by host). 277–278 (EE) is a binding site for substrate. Arg293 contacts substrate. Asp294, Gly298, and Asp325 together coordinate Ca(2+). A substrate-binding site is contributed by Arg372. Asn402 carries an N-linked (GlcNAc...) asparagine; by host glycan. The active-site Nucleophile is Tyr406.

Belongs to the glycosyl hydrolase 34 family. As to quaternary structure, homotetramer. The cofactor is Ca(2+). N-glycosylated.

The protein resides in the virion membrane. The protein localises to the host apical cell membrane. It catalyses the reaction Hydrolysis of alpha-(2-&gt;3)-, alpha-(2-&gt;6)-, alpha-(2-&gt;8)- glycosidic linkages of terminal sialic acid residues in oligosaccharides, glycoproteins, glycolipids, colominic acid and synthetic substrates.. Inhibited by the neuraminidase inhibitors zanamivir (Relenza) and oseltamivir (Tamiflu). These drugs interfere with the release of progeny virus from infected cells and are effective against all influenza strains. Resistance to neuraminidase inhibitors is quite rare. Catalyzes the removal of terminal sialic acid residues from viral and cellular glycoconjugates. Cleaves off the terminal sialic acids on the glycosylated HA during virus budding to facilitate virus release. Additionally helps virus spread through the circulation by further removing sialic acids from the cell surface. These cleavages prevent self-aggregation and ensure the efficient spread of the progeny virus from cell to cell. Otherwise, infection would be limited to one round of replication. Described as a receptor-destroying enzyme because it cleaves a terminal sialic acid from the cellular receptors. May facilitate viral invasion of the upper airways by cleaving the sialic acid moieties on the mucin of the airway epithelial cells. Likely to plays a role in the budding process through its association with lipid rafts during intracellular transport. May additionally display a raft-association independent effect on budding. Plays a role in the determination of host range restriction on replication and virulence. Sialidase activity in late endosome/lysosome traffic seems to enhance virus replication. The chain is Neuraminidase from Influenza A virus (strain A/Budgerigar/Hokkaido/1/1977 H4N6).